The primary structure comprises 233 residues: 5'-methylthioadenosine/S-adenosylhomocysteine nucleosidase (233 aa).

Glutamate 12 (proton acceptor) is an active-site residue. Substrate contacts are provided by residues glycine 78, isoleucine 152, and 173-174 (ME). Residue aspartate 197 is the Proton donor of the active site.

It belongs to the PNP/UDP phosphorylase family. MtnN subfamily. Homodimer.

The catalysed reaction is S-adenosyl-L-homocysteine + H2O = S-(5-deoxy-D-ribos-5-yl)-L-homocysteine + adenine. It carries out the reaction S-methyl-5'-thioadenosine + H2O = 5-(methylsulfanyl)-D-ribose + adenine. The enzyme catalyses 5'-deoxyadenosine + H2O = 5-deoxy-D-ribose + adenine. The protein operates within amino-acid biosynthesis; L-methionine biosynthesis via salvage pathway; S-methyl-5-thio-alpha-D-ribose 1-phosphate from S-methyl-5'-thioadenosine (hydrolase route): step 1/2. Catalyzes the irreversible cleavage of the glycosidic bond in both 5'-methylthioadenosine (MTA) and S-adenosylhomocysteine (SAH/AdoHcy) to adenine and the corresponding thioribose, 5'-methylthioribose and S-ribosylhomocysteine, respectively. Also cleaves 5'-deoxyadenosine, a toxic by-product of radical S-adenosylmethionine (SAM) enzymes, into 5-deoxyribose and adenine. Thus, is required for in vivo function of the radical SAM enzymes biotin synthase and lipoic acid synthase, that are inhibited by 5'-deoxyadenosine accumulation. The polypeptide is 5'-methylthioadenosine/S-adenosylhomocysteine nucleosidase (Yersinia pestis bv. Antiqua (strain Angola)).